The chain runs to 103 residues: Large ribosomal subunit protein bL21 (103 aa).

It belongs to the bacterial ribosomal protein bL21 family. As to quaternary structure, part of the 50S ribosomal subunit. Contacts protein L20.

This protein binds to 23S rRNA in the presence of protein L20. The protein is Large ribosomal subunit protein bL21 of Acinetobacter baylyi (strain ATCC 33305 / BD413 / ADP1).